Reading from the N-terminus, the 638-residue chain is Methionine--tRNA ligase (638 aa).

The 'HIGH' region signature appears at 12–22 (YYPSDKLHIGH). The Zn(2+) site is built by C127, C130, C144, and C147. Residues 296-300 (KMSKS) carry the 'KMSKS' region motif. K299 is an ATP binding site. The region spanning 538–638 (DFSKVQLRVA…KDIESGSKIS (101 aa)) is the tRNA-binding domain.

This sequence belongs to the class-I aminoacyl-tRNA synthetase family. MetG type 2A subfamily. As to quaternary structure, homodimer. Zn(2+) is required as a cofactor.

Its subcellular location is the cytoplasm. It catalyses the reaction tRNA(Met) + L-methionine + ATP = L-methionyl-tRNA(Met) + AMP + diphosphate. In terms of biological role, is required not only for elongation of protein synthesis but also for the initiation of all mRNA translation through initiator tRNA(fMet) aminoacylation. This Caldanaerobacter subterraneus subsp. tengcongensis (strain DSM 15242 / JCM 11007 / NBRC 100824 / MB4) (Thermoanaerobacter tengcongensis) protein is Methionine--tRNA ligase (metG).